The chain runs to 271 residues: Phosphonoacetaldehyde hydrolase (271 aa).

D12 functions as the Nucleophile in the catalytic mechanism. Positions 12 and 14 each coordinate Mg(2+). Residue K54 is the Schiff-base intermediate with substrate of the active site. D188 is a Mg(2+) binding site.

It belongs to the HAD-like hydrolase superfamily. PhnX family. In terms of assembly, homodimer. Mg(2+) is required as a cofactor.

It catalyses the reaction phosphonoacetaldehyde + H2O = acetaldehyde + phosphate + H(+). In terms of biological role, involved in phosphonate degradation. This is Phosphonoacetaldehyde hydrolase from Vibrio cholerae serotype O1 (strain ATCC 39541 / Classical Ogawa 395 / O395).